The sequence spans 270 residues: A-type potassium channel modulatory protein KCNIP2 (270 aa).

Positions 1-17 (MRGQGRKESLSDSRDLD) are enriched in basic and acidic residues. A disordered region spans residues 1–32 (MRGQGRKESLSDSRDLDGSYDQLTGHPPGPTK). Serine 9 bears the Phosphoserine mark. S-palmitoyl cysteine attachment occurs at residues cysteine 45 and cysteine 46. An EF-hand 1; degenerate domain is found at 81-137 (FELSTVCHRPEGLEQLQEQTKFTRKELQVLYRGFKNECPSGIVNEENFKQIYSQFFP). EF-hand domains are found at residues 140 to 175 (DSST…ILRG), 176 to 211 (TVDD…IYDM), and 224 to 259 (APRE…DENI). Ca(2+) contacts are provided by aspartate 153, asparagine 155, aspartate 157, serine 159, aspartate 164, aspartate 189, asparagine 191, aspartate 193, cysteine 195, glutamate 200, aspartate 237, asparagine 239, aspartate 241, and glutamate 248. Residues 257–270 (ENIMRSMQLFDNVI) form an interaction with KCND2 region.

The protein belongs to the recoverin family. As to quaternary structure, component of heteromultimeric potassium channels. Identified in potassium channel complexes containing KCND1, KCND2, KCND3, KCNIP1, KCNIP2, KCNIP3, KCNIP4, DPP6 and DPP10. The KCND2-KCNIP2 channel complex contains four KCND2 and four KCNIP2 subunits. Interacts with KCND2. Probably part of a complex consisting of KCNIP1, KCNIP2 isoform 3 and KCND2. At least isoform 2 and isoform 3 can self-associate to form homodimers and homotetramers. Isoform 3 interacts with KCNIP1 in a calcium-dependent manner. Interacts with KCND3; each KCNIP2 monomer interacts with two adjacent KCND3 subunits, through both the N-terminal inactivation ball of a KCND3 subunit and a C-terminal helix from the adjacent KCND3 subunit, clamping them together; this interaction modulates the channel gating kinetics. In terms of processing, palmitoylated. Palmitoylation enhances association with the plasma membrane. In terms of tissue distribution, expressed in brain. Colocalizes with KCND2 in excitatory neurons including cortical and hippocampal CA1 pyramidal cells. Isoform 3 is expressed in heart and in umbilical vein endothelial cells. Not expressed in fetal heart.

Its subcellular location is the cell membrane. Its function is as follows. Regulatory subunit of Kv4/D (Shal)-type voltage-gated rapidly inactivating A-type potassium channels. Modulates channel density, inactivation kinetics and rate of recovery from inactivation in a calcium-dependent and isoform-specific manner. Involved in KCND2 and KCND3 trafficking to the cell surface. May be required for the expression of I(To) currents in the heart. The protein is A-type potassium channel modulatory protein KCNIP2 of Homo sapiens (Human).